Reading from the N-terminus, the 345-residue chain is Probable aldo-keto reductase 4 (345 aa).

The active-site Proton donor is Y63. H130 contributes to the substrate binding site. Position 209–219 (209–219) interacts with NADP(+); it reads SPLGRGFFASG.

This sequence belongs to the aldo/keto reductase family.

This is Probable aldo-keto reductase 4 from Arabidopsis thaliana (Mouse-ear cress).